Here is a 147-residue protein sequence, read N- to C-terminus: 3-dehydroquinate dehydratase (147 aa).

Y26 functions as the Proton acceptor in the catalytic mechanism. Substrate-binding residues include N77, H83, and D90. The Proton donor role is filled by H103. Residues 104–105 (LS) and R114 contribute to the substrate site.

Belongs to the type-II 3-dehydroquinase family. Homododecamer.

It carries out the reaction 3-dehydroquinate = 3-dehydroshikimate + H2O. It functions in the pathway metabolic intermediate biosynthesis; chorismate biosynthesis; chorismate from D-erythrose 4-phosphate and phosphoenolpyruvate: step 3/7. Functionally, catalyzes a trans-dehydration via an enolate intermediate. This chain is 3-dehydroquinate dehydratase, found in Proteus mirabilis (strain HI4320).